The sequence spans 384 residues: S-adenosylmethionine synthase (384 aa).

Residue His15 participates in ATP binding. Asp17 is a Mg(2+) binding site. A K(+)-binding site is contributed by Glu43. 2 residues coordinate L-methionine: Glu56 and Gln99. The flexible loop stretch occupies residues 99–109; sequence QSPDINQGVDR. Residues 164 to 166, 230 to 231, Asp239, 245 to 246, Ala262, and Lys266 contribute to the ATP site; these read DAK, RF, and RK. Asp239 serves as a coordination point for L-methionine. Lys270 is a binding site for L-methionine.

It belongs to the AdoMet synthase family. Homotetramer; dimer of dimers. Mg(2+) is required as a cofactor. Requires K(+) as cofactor.

It is found in the cytoplasm. It carries out the reaction L-methionine + ATP + H2O = S-adenosyl-L-methionine + phosphate + diphosphate. It functions in the pathway amino-acid biosynthesis; S-adenosyl-L-methionine biosynthesis; S-adenosyl-L-methionine from L-methionine: step 1/1. Functionally, catalyzes the formation of S-adenosylmethionine (AdoMet) from methionine and ATP. The overall synthetic reaction is composed of two sequential steps, AdoMet formation and the subsequent tripolyphosphate hydrolysis which occurs prior to release of AdoMet from the enzyme. The polypeptide is S-adenosylmethionine synthase (Serratia proteamaculans (strain 568)).